The chain runs to 584 residues: Insulin-like growth factor 2 mRNA-binding protein 3 (584 aa).

RRM domains lie at 2-75 (NKLY…HSVP) and 81-156 (RKLQ…YIPD). A disordered region spans residues 160–199 (AQQPPQQHPQGRRGFGQRGPPRQGSPSATTRQKPQSDVPL). Residues 184–194 (SPSATTRQKPQ) are compositionally biased toward polar residues. KH domains are found at residues 196–261 (DVPL…CKII), 277–344 (EIPL…EEEI), 409–474 (SETV…QGRI), and 491–557 (KLEA…QRKI).

This sequence belongs to the RRM IMP/VICKZ family. As to quaternary structure, homodimer and multimer.

Its subcellular location is the cytoplasm. The protein localises to the nucleus. It is found in the P-body. The protein resides in the stress granule. RNA-binding factor that may recruit target transcripts to cytoplasmic protein-RNA complexes (mRNPs). This transcript 'caging' into mRNPs allows mRNA transport and transient storage. It also modulates the rate and location at which target transcripts encounter the translational apparatus and shields them from endonuclease attacks or microRNA-mediated degradation. Preferentially binds to N6-methyladenosine (m6A)-containing mRNAs and increases their stability. In Gallus gallus (Chicken), this protein is Insulin-like growth factor 2 mRNA-binding protein 3 (IGF2BP3).